The sequence spans 598 residues: Inactive metallocarboxypeptidase ECM14 (598 aa).

A signal peptide spans 1–21 (MRLFTHGQVLALLAFVNTISA). Residues 22 to 174 (IPSFSTNSYP…QTIYESYPSP (153 aa)) constitute a propeptide that is removed on maturation. The 321-residue stretch at 202–522 (NYQPLSVIVP…NAVMMLGRFL (321 aa)) folds into the Peptidase M14 domain. 2 residues coordinate Zn(2+): histidine 264 and glutamate 267. Residues 264–267 (HARE), arginine 322, and 339–340 (DR) each bind substrate. Cysteines 333 and 356 form a disulfide. Asparagine 349 is a glycosylation site (N-linked (GlcNAc...) asparagine). Histidine 396 serves as a coordination point for Zn(2+). Residue 397-398 (SY) coordinates substrate. Residues 539–598 (QRPNKDDKPILNDDDDDDDADTNDDGIGRKDDSWIPDEYKGDNDRDESDGGWAFRRLRKR) form a disordered region. Residues 550–562 (NDDDDDDDADTND) show a composition bias toward acidic residues. Residues 564 to 581 (GIGRKDDSWIPDEYKGDN) are compositionally biased toward basic and acidic residues.

This sequence belongs to the peptidase M14 family. Zn(2+) serves as cofactor.

The protein localises to the vacuole. It is found in the secreted. Its function is as follows. Inactive carboxypeptidase that may play a role in cell wall organization and biogenesis. This is Inactive metallocarboxypeptidase ECM14 (ECM14) from Ajellomyces capsulatus (strain H143) (Darling's disease fungus).